A 102-amino-acid polypeptide reads, in one-letter code: NADH-quinone oxidoreductase subunit K (102 aa).

Helical transmembrane passes span 6-26 (LGQG…GVLV), 30-50 (LLFM…AFIV), and 64-84 (FILV…LILL).

The protein belongs to the complex I subunit 4L family. In terms of assembly, NDH-1 is composed of 14 different subunits. Subunits NuoA, H, J, K, L, M, N constitute the membrane sector of the complex.

The protein resides in the cell inner membrane. It catalyses the reaction a quinone + NADH + 5 H(+)(in) = a quinol + NAD(+) + 4 H(+)(out). In terms of biological role, NDH-1 shuttles electrons from NADH, via FMN and iron-sulfur (Fe-S) centers, to quinones in the respiratory chain. The immediate electron acceptor for the enzyme in this species is believed to be ubiquinone. Couples the redox reaction to proton translocation (for every two electrons transferred, four hydrogen ions are translocated across the cytoplasmic membrane), and thus conserves the redox energy in a proton gradient. This is NADH-quinone oxidoreductase subunit K from Acidiphilium cryptum (strain JF-5).